Reading from the N-terminus, the 341-residue chain is Spindle assembly checkpoint protein BUB3 (341 aa).

WD repeat units lie at residues 9–48 (APKD…KNVD), 54–96 (RYKH…QALT), 97–137 (NNEA…DGVI), 144–185 (SNNT…DDNG), 191–233 (GLKY…YNSS), 249–288 (NLAY…KIKN), and 292–329 (FNED…IELN).

This sequence belongs to the WD repeat BUB3 family. In terms of assembly, component of the mitotic checkpoint complex (MCC) which consists of MAD2, MAD3, BUB3 and CDC20. Part of complex consisting of MAD1, BUB1 and BUB3 after activation of spindle checkpoint. Part of the BUB1-BUB3 complex, composed of BUB1 and BUB3. Interacts with SPC105 (via phosphorylated MELT motifs); the interaction is direct and occurs when part of the BUB1-BUB3 complex. Interacts with MAD3; the interaction is direct. Post-translationally, phosphorylated by BUB1.

It is found in the nucleus. It localises to the chromosome. Its subcellular location is the centromere. The protein resides in the kinetochore. In terms of biological role, involved in mitotic spindle assembly checkpoint signaling, a process that delays anaphase until chromosomes are bioriented on the spindle, and in the repair of incorrect mitotic kinetochore-spindle microtubule attachments. Component of the mitotic checkpoint complex (MCC) which inhibits the ubiquitin ligase activity of the anaphase promoting complex/cyclosome (APC/C) by preventing its activation by CDC20. The sequence is that of Spindle assembly checkpoint protein BUB3 (BUB3) from Saccharomyces cerevisiae (strain ATCC 204508 / S288c) (Baker's yeast).